The primary structure comprises 456 residues: tRNA-2-methylthio-N(6)-dimethylallyladenosine synthase (456 aa).

The MTTase N-terminal domain occupies 19–136; sequence LTFNVQTFGC…LAELIYARHT (118 aa). [4Fe-4S] cluster is bound by residues C28, C63, C97, C173, C177, and C180. Residues 159 to 389 form the Radical SAM core domain; it reads QKYKFKAGVN…LTTIRESSSK (231 aa). A TRAM domain is found at 392–455; it reads KDDEGKIAEV…GFYYMGEMME (64 aa).

It belongs to the methylthiotransferase family. MiaB subfamily. As to quaternary structure, monomer. It depends on [4Fe-4S] cluster as a cofactor.

The protein resides in the cytoplasm. The catalysed reaction is N(6)-dimethylallyladenosine(37) in tRNA + (sulfur carrier)-SH + AH2 + 2 S-adenosyl-L-methionine = 2-methylsulfanyl-N(6)-dimethylallyladenosine(37) in tRNA + (sulfur carrier)-H + 5'-deoxyadenosine + L-methionine + A + S-adenosyl-L-homocysteine + 2 H(+). Functionally, catalyzes the methylthiolation of N6-(dimethylallyl)adenosine (i(6)A), leading to the formation of 2-methylthio-N6-(dimethylallyl)adenosine (ms(2)i(6)A) at position 37 in tRNAs that read codons beginning with uridine. This chain is tRNA-2-methylthio-N(6)-dimethylallyladenosine synthase, found in Lachnoclostridium phytofermentans (strain ATCC 700394 / DSM 18823 / ISDg) (Clostridium phytofermentans).